The primary structure comprises 51 residues: Large ribosomal subunit protein eL40 (51 aa).

Belongs to the eukaryotic ribosomal protein eL40 family.

The sequence is that of Large ribosomal subunit protein eL40 from Thermofilum pendens (strain DSM 2475 / Hrk 5).